The primary structure comprises 135 residues: Large ribosomal subunit protein mL41B (135 aa).

Residues 1–13 (MGLITKIARGLVR) constitute a mitochondrion transit peptide.

The protein belongs to the mitochondrion-specific ribosomal protein mL41 family. Component of the mitochondrial ribosome large subunit (39S) which comprises a 16S rRNA and about 50 distinct proteins.

It is found in the mitochondrion. Functionally, component of the mitochondrial ribosome large subunit. Also involved in apoptosis and cell cycle. This chain is Large ribosomal subunit protein mL41B (mrpl41-b), found in Xenopus laevis (African clawed frog).